We begin with the raw amino-acid sequence, 447 residues long: Na(+)-translocating NADH-quinone reductase subunit A (447 aa).

It belongs to the NqrA family. In terms of assembly, composed of six subunits; NqrA, NqrB, NqrC, NqrD, NqrE and NqrF.

It catalyses the reaction a ubiquinone + n Na(+)(in) + NADH + H(+) = a ubiquinol + n Na(+)(out) + NAD(+). In terms of biological role, NQR complex catalyzes the reduction of ubiquinone-1 to ubiquinol by two successive reactions, coupled with the transport of Na(+) ions from the cytoplasm to the periplasm. NqrA to NqrE are probably involved in the second step, the conversion of ubisemiquinone to ubiquinol. The sequence is that of Na(+)-translocating NADH-quinone reductase subunit A from Photorhabdus laumondii subsp. laumondii (strain DSM 15139 / CIP 105565 / TT01) (Photorhabdus luminescens subsp. laumondii).